A 551-amino-acid chain; its full sequence is Structure-specific endonuclease subunit MUS81 (551 aa).

Disordered regions lie at residues 85–131 (LASG…AGYW) and 231–255 (PEEH…EVGV). Position 95 is a phosphoserine (Ser-95). Positions 110 to 131 (VQGSSMPVPTQPQAGSTNAGYW) are enriched in polar residues. The interaction with BLM stretch occupies residues 124 to 243 (GSTNAGYWPA…HHEESPVPEA (120 aa)). Residues 131 to 230 (WPAQNSGARE…GLSTLNTAFQ (100 aa)) are winged helix domain (WHD); critical for endonuclease activity. The 103-residue stretch at 270–372 (LLCVDIGETR…HRIYLVEEHG (103 aa)) folds into the ERCC4 domain. Catalysis depends on residues Asp-274, Glu-277, and Asp-307. 5 residues coordinate Mg(2+): Asp-274, Glu-277, Asp-307, Glu-333, and Arg-334. The helix-hairpin-helix (2HhH); involved in DNA recognition and bending stretch occupies residues 471 to 545 (VREVFARQLM…LSRTLYQLYC (75 aa)).

The protein belongs to the XPF family. Part of the heterodimeric DNA structure-specific endonuclease complex MUS81-EME1. Part of the heterodimeric DNA structure-specific endonuclease complex MUS81-EME2. Interacts with BLM; may stimulate the endonuclease activity of MUS81. Interacts with SLX4/BTBD12; this interaction is direct and links the MUS81-EME1 complex to SLX4, which may coordinate the action of the structure-specific endonuclease during DNA repair. Interacts with DCLRE1B/Apollo. Interacts with RECQL5; this interaction stimulates mitotic DNA synthesis. Interacts with CHEK2. It depends on Mg(2+) as a cofactor.

The protein localises to the nucleus. It is found in the nucleolus. In terms of biological role, catalytic subunit of two functionally distinct, structure-specific, heterodimeric DNA endonucleases MUS81-EME1 and MUS81-EME2 that are involved in the maintenance of genome stability. Both endonucleases have essentially the same substrate specificity though MUS81-EME2 is more active than its MUS81-EME1 counterpart. Both cleave 3'-flaps and nicked Holliday junctions, and exhibit limited endonuclease activity with 5' flaps and nicked double-stranded DNAs. MUS81-EME2 which is active during the replication of DNA is more specifically involved in replication fork processing. Replication forks frequently encounter obstacles to their passage, including DNA base lesions, DNA interstrand cross-links, difficult-to-replicate sequences, transcription bubbles, or tightly bound proteins. One mechanism for the restart of a stalled replication fork involves nucleolytic cleavage mediated by the MUS81-EME2 endonuclease. By acting upon the stalled fork, MUS81-EME2 generates a DNA double-strand break (DSB) that can be repaired by homologous recombination, leading to the restoration of an active fork. MUS81-EME2 could also function in telomere maintenance. MUS81-EME1, on the other hand, is active later in the cell cycle and functions in the resolution of mitotic recombination intermediates including the Holliday junctions, the four-way DNA intermediates that form during homologous recombination. This Rattus norvegicus (Rat) protein is Structure-specific endonuclease subunit MUS81.